The sequence spans 488 residues: Calcium uniporter protein, mitochondrial (488 aa).

The transit peptide at 1-74 (MRALVSRTPI…RSFQLSASSR (74 aa)) directs the protein to the mitochondrion. Residues 65-117 (RSFQLSASSRDKRGPQSAEPDPLERLEVKKVQQQHENEKDDSGRDTKSGGKVA) form a disordered region. The Mitochondrial matrix segment spans residues 75 to 339 (DKRGPQSAEP…ECDALAHRGA (265 aa)). Basic and acidic residues predominate over residues 86-112 (PLERLEVKKVQQQHENEKDDSGRDTKS). A helical transmembrane segment spans residues 340–361 (QRVALGGFGILAFWWYIVYKLT). Residues 362–370 (FETDLGWDT) are Mitochondrial intermembrane-facing. Positions 368–376 (WDTMEPVTY) match the Selectivity filter motif. Residues 371 to 391 (MEPVTYLVSLSTLMGGYLWFL) traverse the membrane as a helical segment. E372 contacts Ca(2+). The Mitochondrial matrix segment spans residues 392 to 488 (YHNREISYRS…ERPKDDRDDD (97 aa)). The interval 464-488 (ALKKERRLKNGSQKEERPKDDRDDD) is disordered. Basic and acidic residues predominate over residues 475–488 (SQKEERPKDDRDDD).

The protein belongs to the MCU (TC 1.A.77) family. In terms of assembly, homotetramer, assembles in a dimer or dimers configuration with two interfaces.

It localises to the mitochondrion inner membrane. The catalysed reaction is Ca(2+)(in) = Ca(2+)(out). Inhibited by ruthenium red or its derivative Ru360. Highly selective calcium channel localized to the inner mitochondrial membrane, which mediates calcium uptake into the mitochondrial matrix. Mitochondrial calcium homeostasis plays key roles in cellular physiology and regulates ATP production, cytoplasmic calcium signals and activation of cell death pathways. Sufficient to operate as a pore-forming channel without the need of calcium-sensor or auxiliary subunit. The chain is Calcium uniporter protein, mitochondrial from Neosartorya fischeri (strain ATCC 1020 / DSM 3700 / CBS 544.65 / FGSC A1164 / JCM 1740 / NRRL 181 / WB 181) (Aspergillus fischerianus).